A 689-amino-acid polypeptide reads, in one-letter code: Glycine--tRNA ligase beta subunit (689 aa).

Belongs to the class-II aminoacyl-tRNA synthetase family. Tetramer of two alpha and two beta subunits.

The protein resides in the cytoplasm. It catalyses the reaction tRNA(Gly) + glycine + ATP = glycyl-tRNA(Gly) + AMP + diphosphate. The protein is Glycine--tRNA ligase beta subunit of Salmonella paratyphi C (strain RKS4594).